Consider the following 192-residue polypeptide: MLLSDRDIRAEIGSGRVALDPFDDAMVQPSSVDVRLDRYFRLFDNHKYAVIDPAEDQPELTRLVEVDPDEAFVLHPGEFVLGSTHETITLPDDVAARLEGKSSLGRLGLLTHSTAGFIDPGFTGHVTLELSNVATLPIMLWPGMKIGQLCFFRLSSPAERPYGSGADGSRYQGQRGPTASRSHVKFHRTHVE.

Residues 101 to 106 (KSSLGR), Asp119, 127 to 129 (TLE), Gln148, Tyr162, and Gln174 each bind dCTP. The active-site Proton donor/acceptor is Glu129. Residues 162-192 (YGSGADGSRYQGQRGPTASRSHVKFHRTHVE) form a disordered region. Residues 171-181 (YQGQRGPTASR) show a composition bias toward polar residues. Basic residues predominate over residues 182–192 (SHVKFHRTHVE).

The protein belongs to the dCTP deaminase family. In terms of assembly, homotrimer.

The catalysed reaction is dCTP + 2 H2O = dUMP + NH4(+) + diphosphate. It participates in pyrimidine metabolism; dUMP biosynthesis; dUMP from dCTP: step 1/1. Its function is as follows. Bifunctional enzyme that catalyzes both the deamination of dCTP to dUTP and the hydrolysis of dUTP to dUMP without releasing the toxic dUTP intermediate. The protein is dCTP deaminase, dUMP-forming of Beutenbergia cavernae (strain ATCC BAA-8 / DSM 12333 / CCUG 43141 / JCM 11478 / NBRC 16432 / NCIMB 13614 / HKI 0122).